Here is a 174-residue protein sequence, read N- to C-terminus: MQGIDVSYSDEVGFLTKGDRDWEDWIMQLLLMAKKEIGKDNAQEMSINFVDEDRSQAINRDYRDKDRPTDVISFAIEDGDDGLDLAMFTQDPDFTEDIGDLFMCPSVIERHSKEYGTGFDREFGYTIVHGYLHLNCYDHIEPDEAKEMFGIQGKVLEEYGLPLYPDQLDEGRGK.

Zn(2+) is bound by residues His-129, His-133, and His-139.

It belongs to the endoribonuclease YbeY family. Zn(2+) serves as cofactor.

It is found in the cytoplasm. Its function is as follows. Single strand-specific metallo-endoribonuclease involved in late-stage 70S ribosome quality control and in maturation of the 3' terminus of the 16S rRNA. This is Endoribonuclease YbeY from Lactobacillus delbrueckii subsp. bulgaricus (strain ATCC BAA-365 / Lb-18).